The chain runs to 117 residues: Large ribosomal subunit protein bL19 (117 aa).

The protein belongs to the bacterial ribosomal protein bL19 family.

In terms of biological role, this protein is located at the 30S-50S ribosomal subunit interface and may play a role in the structure and function of the aminoacyl-tRNA binding site. In Paenarthrobacter aurescens (strain TC1), this protein is Large ribosomal subunit protein bL19.